The sequence spans 233 residues: Orotidine 5'-phosphate decarboxylase (233 aa).

Residues D12, K34, 61–70 (DWKLHDIGAT), T116, R181, Q190, G210, and R211 each bind substrate. K63 (proton donor) is an active-site residue.

This sequence belongs to the OMP decarboxylase family. Type 1 subfamily. As to quaternary structure, homodimer.

It carries out the reaction orotidine 5'-phosphate + H(+) = UMP + CO2. Its pathway is pyrimidine metabolism; UMP biosynthesis via de novo pathway; UMP from orotate: step 2/2. Functionally, catalyzes the decarboxylation of orotidine 5'-monophosphate (OMP) to uridine 5'-monophosphate (UMP). The sequence is that of Orotidine 5'-phosphate decarboxylase from Caulobacter vibrioides (strain ATCC 19089 / CIP 103742 / CB 15) (Caulobacter crescentus).